The primary structure comprises 276 residues: Dermonecrotic toxin LlSicTox-alphaIV2i (276 aa).

Histidine 5 is an active-site residue. The Mg(2+) site is built by glutamate 25 and aspartate 27. Catalysis depends on histidine 41, which acts as the Nucleophile. Disulfide bonds link cysteine 45–cysteine 51 and cysteine 47–cysteine 193. Aspartate 85 lines the Mg(2+) pocket.

Belongs to the arthropod phospholipase D family. Class II subfamily. The cofactor is Mg(2+). Expressed by the venom gland.

The protein localises to the secreted. The enzyme catalyses an N-(acyl)-sphingosylphosphocholine = an N-(acyl)-sphingosyl-1,3-cyclic phosphate + choline. The catalysed reaction is an N-(acyl)-sphingosylphosphoethanolamine = an N-(acyl)-sphingosyl-1,3-cyclic phosphate + ethanolamine. It catalyses the reaction a 1-acyl-sn-glycero-3-phosphocholine = a 1-acyl-sn-glycero-2,3-cyclic phosphate + choline. It carries out the reaction a 1-acyl-sn-glycero-3-phosphoethanolamine = a 1-acyl-sn-glycero-2,3-cyclic phosphate + ethanolamine. Dermonecrotic toxins cleave the phosphodiester linkage between the phosphate and headgroup of certain phospholipids (sphingolipid and lysolipid substrates), forming an alcohol (often choline) and a cyclic phosphate. This toxin acts on sphingomyelin (SM). It may also act on ceramide phosphoethanolamine (CPE), lysophosphatidylcholine (LPC) and lysophosphatidylethanolamine (LPE), but not on lysophosphatidylserine (LPS), and lysophosphatidylglycerol (LPG). It acts by transphosphatidylation, releasing exclusively cyclic phosphate products as second products. Induces dermonecrosis, hemolysis, increased vascular permeability, edema, inflammatory response, and platelet aggregation. The protein is Dermonecrotic toxin LlSicTox-alphaIV2i of Loxosceles laeta (South American recluse spider).